A 313-amino-acid chain; its full sequence is GTPase Era (313 aa).

The Era-type G domain occupies 20–187 (RSGFVALIGA…MDYLAETLPE (168 aa)). A G1 region spans residues 28–35 (GATNAGKS). 28–35 (GATNAGKS) contacts GTP. The G2 stretch occupies residues 54–58 (QTTRA). The tract at residues 75–78 (DTPG) is G3. GTP contacts are provided by residues 75-79 (DTPGI) and 137-140 (NKVD). Positions 137–140 (NKVD) are G4. Positions 166–168 (ISA) are G5. Positions 218–295 (LHQELPYASH…HLFLFVKVRE (78 aa)) constitute a KH type-2 domain.

Belongs to the TRAFAC class TrmE-Era-EngA-EngB-Septin-like GTPase superfamily. Era GTPase family. In terms of assembly, monomer.

It localises to the cytoplasm. Its subcellular location is the cell inner membrane. An essential GTPase that binds both GDP and GTP, with rapid nucleotide exchange. Plays a role in 16S rRNA processing and 30S ribosomal subunit biogenesis and possibly also in cell cycle regulation and energy metabolism. The polypeptide is GTPase Era (Rhizobium meliloti (strain 1021) (Ensifer meliloti)).